Consider the following 713-residue polypeptide: Low-density lipoprotein receptor-related protein 10 (713 aa).

Residues Met-1–Ala-17 form the signal peptide. Topologically, residues Arg-18–Lys-441 are extracellular. Cystine bridges form between Cys-29–Cys-58 and Cys-81–Cys-99. A CUB 1 domain is found at Cys-29–Asp-137. Residue Asn-57 is glycosylated (N-linked (GlcNAc...) asparagine). A glycan (N-linked (GlcNAc...) asparagine) is linked at Asn-112. One can recognise an LDL-receptor class A 1 domain in the interval Leu-140 to Ser-176. 4 disulfides stabilise this stretch: Cys-141/Cys-153, Cys-148/Cys-166, Cys-160/Cys-175, and Cys-193/Cys-221. In terms of domain architecture, CUB 2 spans Cys-193 to Arg-306. N-linked (GlcNAc...) asparagine glycosylation is found at Asn-194 and Asn-300. LDL-receptor class A domains follow at residues Tyr-308 to Pro-355, Gly-356 to Arg-398, and His-399 to Ser-435. Cystine bridges form between Cys-309–Cys-332, Cys-316–Cys-345, Cys-339–Cys-354, Cys-357–Cys-375, Cys-364–Cys-388, Cys-382–Cys-397, Cys-400–Cys-412, Cys-407–Cys-425, and Cys-419–Cys-434. Residues Val-442–Gly-462 traverse the membrane as a helical segment. Residues Cys-463 to Ala-713 are Cytoplasmic-facing. Residues Leu-566 to Glu-636 are disordered. A Phosphothreonine modification is found at Thr-596. A compositionally biased stretch (pro residues) spans Pro-614–Ser-626.

The protein belongs to the LDLR family. As to expression, highly expressed in heart, lung, liver and liver. Expressed at low level in brain and spleen. Weakly or not expressed in testis and skeletal muscle. In liver, it is expressed in hepatocytes and at higher level in sinusoidal lining. In the kidney, it is expressed in peritubular capillaries. In brain, it is expressed in the epithelium of the choroid plexus ependymal cells of the third ventricle pia matter, and to lesser extent in hippocampal fields CA2 and CA3.

It localises to the membrane. Its subcellular location is the coated pit. Functionally, probable receptor, which is involved in the internalization of lipophilic molecules and/or signal transduction. May be involved in the uptake of lipoprotein APOE in liver. In Mus musculus (Mouse), this protein is Low-density lipoprotein receptor-related protein 10 (Lrp10).